Consider the following 379-residue polypeptide: cAMP-dependent protein kinase type I-alpha regulatory subunit (379 aa).

At methionine 1 the chain carries N-acetylmethionine. The tract at residues 1–134 is dimerization and phosphorylation; the sequence is MASSSTSSEE…ALAKAIEKNV (134 aa). Positions 63–93 are disordered; that stretch reads QMVSQQKSSSRSDSREDEVSPPMNPVVKGRR. A Pseudophosphorylation motif motif is present at residues 94 to 98; the sequence is RRGAI. 3',5'-cyclic AMP is bound by residues 135 to 252, glutamate 200, arginine 209, 253 to 379, glutamate 324, and arginine 333; these read LFAH…SKVS and ILES…SLSV.

The protein belongs to the cAMP-dependent kinase regulatory chain family. As to quaternary structure, the inactive holoenzyme is composed of two regulatory chains and two catalytic chains. Activation by cAMP releases the two active catalytic monomers and the regulatory dimer. Interacts with PRKACA and PRKACB. Interacts with PRRC1; resulting in PKA activation. The pseudophosphorylation site binds to the substrate-binding region of the catalytic chain, resulting in the inhibition of its activity.

The protein localises to the cell membrane. Regulatory subunit of the cAMP-dependent protein kinases involved in cAMP signaling in cells. This is cAMP-dependent protein kinase type I-alpha regulatory subunit (prkar1aa) from Danio rerio (Zebrafish).